The following is a 229-amino-acid chain: Protein-L-isoaspartate O-methyltransferase (229 aa).

The active site involves Ser78.

It belongs to the methyltransferase superfamily. L-isoaspartyl/D-aspartyl protein methyltransferase family.

It localises to the cytoplasm. It catalyses the reaction [protein]-L-isoaspartate + S-adenosyl-L-methionine = [protein]-L-isoaspartate alpha-methyl ester + S-adenosyl-L-homocysteine. Catalyzes the methyl esterification of L-isoaspartyl residues in peptides and proteins that result from spontaneous decomposition of normal L-aspartyl and L-asparaginyl residues. It plays a role in the repair and/or degradation of damaged proteins. This chain is Protein-L-isoaspartate O-methyltransferase, found in Chromohalobacter salexigens (strain ATCC BAA-138 / DSM 3043 / CIP 106854 / NCIMB 13768 / 1H11).